Reading from the N-terminus, the 863-residue chain is Paramyosin (863 aa).

The interval 1 to 18 is nonhelical region; the sequence is MSESHVKISRTIIRGTSP. A coiled-coil region spans residues 19 to 836; it reads STVRLESRVR…ERTITIKRTI (818 aa). The segment at 837–863 is nonhelical region; the sequence is GGPGSRAVSVVREINSVSRGNRATSIM.

Belongs to the paramyosin family. As to quaternary structure, homodimer or monomer in secreted form.

The protein localises to the cytoplasm. It is found in the myofibril. The protein resides in the secreted. Its function is as follows. Paramyosin is a major structural component of many thick filaments isolated from invertebrate muscles. It is a prominent antigen in human cysticercosis, may have a role as a modulator of the host immune response. It is able to bind collagen and has complement inhibitor activity. The sequence is that of Paramyosin (PMY) from Taenia solium (Pork tapeworm).